The primary structure comprises 452 residues: Lysine-rich nucleolar protein 1 (452 aa).

Disordered stretches follow at residues 1 to 28, 55 to 161, and 184 to 305; these read MITK…VKEP, VIQE…AFSG, and REQA…PDTD. Residue Lys-7 forms a Glycyl lysine isopeptide (Lys-Gly) (interchain with G-Cter in SUMO2) linkage. The span at 65–75 shows a compositional bias: basic residues; that stretch reads LVKKKKKKKGH. Residues 78–98 are compositionally biased toward basic and acidic residues; that stretch reads ICEEHLEPEITLRAGRTERSH. Ser-112 is subject to Phosphoserine. Residue Lys-126 forms a Glycyl lysine isopeptide (Lys-Gly) (interchain with G-Cter in SUMO2) linkage. Residues 127-139 are compositionally biased toward basic and acidic residues; sequence TSPDPRQDEEVTR. Position 128 is a phosphoserine (Ser-128). Composition is skewed to basic residues over residues 140 to 151 and 258 to 267; these read VGKKLKKHKKEK and SVKKKVKSKK. The residue at position 258 (Ser-258) is a Phosphoserine. Lys-280 is covalently cross-linked (Glycyl lysine isopeptide (Lys-Gly) (interchain with G-Cter in SUMO2)). Acidic residues predominate over residues 293 to 305; the sequence is VAEEPWEEEPDTD. Residues 300–452 are interaction with ZNF106; that stretch reads EEPDTDLEVV…NASKSIKFED (153 aa). Thr-304 is subject to Phosphothreonine. Glycyl lysine isopeptide (Lys-Gly) (interchain with G-Cter in SUMO2) cross-links involve residues Lys-313, Lys-347, Lys-367, Lys-369, and Lys-401. Arg-424 bears the Omega-N-methylarginine mark. Lys-436 participates in a covalent cross-link: Glycyl lysine isopeptide (Lys-Gly) (interchain with G-Cter in SUMO2).

In terms of assembly, interacts with ZNF106.

It is found in the nucleus. Its subcellular location is the nucleolus. In Bos taurus (Bovine), this protein is Lysine-rich nucleolar protein 1 (KNOP1).